We begin with the raw amino-acid sequence, 436 residues long: Transcription factor MYB124 (436 aa).

A compositionally biased stretch (basic residues) spans 1–11; sequence MEDTKKKKKKN. Positions 1-23 are disordered; that stretch reads MEDTKKKKKKNINNNQDSKKKER. Residues 8–15 carry the Nuclear localization signal 1 motif; it reads KKKNINNN. HTH myb-type domains follow at residues 20–71 and 72–126; these read KKER…YTYL and NSDF…KKRA. 2 consecutive DNA-binding regions (H-T-H motif) follow at residues 48 to 71 and 99 to 122; these read WAIIASKFKDKSTRQCRRRWYTYL and WTEIAKVVSGRTDNAVKNRFTTLC. The Nuclear localization signal 2 signature appears at 151 to 158; it reads PRKSENET. Residues 309-328 form a disordered region; the sequence is SWRQPDLHDSPASSEYSSGS. The segment covering 319–328 has biased composition (polar residues); it reads PASSEYSSGS.

In terms of assembly, interacts with RBR1. Expressed in all shoot organs with higher levels in leaves, stems, flowers, siliques and floral buds. Also detected in roots tips.

It localises to the nucleus. Functionally, transcription factor that binds to DNA in promoters cis-regulatory element 5'-GGCGCGC-3' of cell cycle genes, including cyclins, cyclin-dependent kinases (CDKs), and components of the pre-replication complex. Binds to DNA in promoters cis-regulatory element 5'-AGCCG-3' of auxin regulated genes (e.g. PIN3 and PIN7). Together with FAMA and MYB88, ensures that stomata contain just two guard cells (GCs) by enforcing a single symmetric precursor cell division before stomatal maturity. Represses the expression of the mitosis-inducing factors CDKB1-1 and CDKA-1, specifically required for the last guard mother cells (GMC) symmetric divisions in the stomatal pathway. Represses CYCA2-3 in newly formed guard cells. Together with MYB88, regulates stomata spacing by restricting divisions late in the stomatal cell lineage thus limiting the number of GMC divisions. In collaboration with CDKB1-1 and CDKB1-2, restrict the G1/S transition and chloroplast and nuclear number during stomatal formation, and normally maintain fate and developmental progression throughout the stomatal cell lineage. Also involved in the shape regulation of pavement cells. Involved in sensing and/or transducing abiotic stress (e.g. drought and salt), probably via the positive regulation of NAC019. Regulates female reproduction being required for entry into megasporogenesis, probably via the regulation of cell cycle genes. Promotes histone H3K27me3 marks and represses stem cell gene expression. Required for lateral roots (LRs) initiation via the regulation of PIN3 expression in an auxin-dependent manner. Involved in responses to gravity stimulation in primary roots by regulating the transcription of PIN3 and PIN7 in gravity-sensing cells, thus modulating auxin asymmetric redistribution. The sequence is that of Transcription factor MYB124 from Arabidopsis thaliana (Mouse-ear cress).